The sequence spans 966 residues: Receptor protein-tyrosine kinase CEPR1 (966 aa).

Positions Met-1 to Ser-22 are cleaved as a signal peptide. Residues Trp-23 to Ser-592 are Extracellular-facing. A glycan (N-linked (GlcNAc...) asparagine) is linked at Asn-61. 20 LRR repeats span residues Gln-70–Tyr-94, Phe-95–Asn-120, Ser-122–Met-144, Lys-145–Leu-168, Asp-170–Leu-194, Thr-195–Leu-218, Thr-219–Leu-242, Leu-245–Leu-267, Lys-268–Leu-291, Pro-292–Ser-315, Thr-317–Ser-339, Pro-341–Ser-363, Lys-365–Ser-386, Cys-387–Leu-411, Pro-412–Ala-435, Asn-437–Ser-459, Thr-460–Leu-483, Arg-484–Leu-507, Lys-508–Leu-531, and Pro-533–Gly-554. Residues Asn-109, Asn-120, Asn-128, and Asn-167 are each glycosylated (N-linked (GlcNAc...) asparagine). Residues Asn-217 and Asn-241 are each glycosylated (N-linked (GlcNAc...) asparagine). Residues Asn-269 and Asn-301 are each glycosylated (N-linked (GlcNAc...) asparagine). Asn-437 is a glycosylation site (N-linked (GlcNAc...) asparagine). N-linked (GlcNAc...) asparagine glycosylation is found at Asn-527 and Asn-537. A helical transmembrane segment spans residues Ser-593–Leu-613. The Cytoplasmic portion of the chain corresponds to Arg-614–Leu-966. Residues Leu-656–Ile-934 form the Protein kinase domain. ATP contacts are provided by residues Val-662–Val-670 and Lys-684. Phosphotyrosine occurs at positions 738 and 775. The active-site Proton acceptor is the Asp-788. Phosphotyrosine occurs at positions 831 and 838. A disordered region spans residues Thr-937–Leu-966.

The protein belongs to the protein kinase superfamily. Ser/Thr protein kinase family. Interacts with the root-derived peptides CEP1, CEP3 and CEP5. As to expression, expressed in the vasculature, especially in phloem and procambium regions, of stems, leaves, cotyledons, sepals, pedals, pedicels, hypocotyls and roots (in primary and lateral roots, but not in root tips). Expressed in the root from the basal meristem onward. Present in the phloem pole pericycle and in the adjacent phloem.

The protein resides in the cell membrane. It catalyses the reaction L-tyrosyl-[protein] + ATP = O-phospho-L-tyrosyl-[protein] + ADP + H(+). In terms of biological role, receptor kinase involved in the perception of C-terminally encoded plant signaling peptide (CEP) and subsequent regulation of root and shoot development. Required for xylem and phloem cell files morphology and organization, probably by preventing ectopic lignification in phloem cells. Together with CEPR2, mediates systemic nitrogen (N)-demand signaling upon the perception of root-derived peptides (e.g. CEP1) via the up-regulation of genes involved in N uptake and assimilation pathways. Positively regulates lateral root initiation and development; probably repressed by the signaling peptide CEP5. This is Receptor protein-tyrosine kinase CEPR1 from Arabidopsis thaliana (Mouse-ear cress).